Consider the following 910-residue polypeptide: Seizure 6-like protein 2 (910 aa).

The signal sequence occupies residues 1 to 27 (MGTPKAQHPPPSQLLLLILLSCAWIEG). The Extracellular portion of the chain corresponds to 28–844 (LPLKEDEMMP…DPSRQLEGGN (817 aa)). Residues 70–152 (PGSDPDPTLA…PLRPEGGEEE (83 aa)) form a disordered region. A compositionally biased stretch (pro residues) spans 123–145 (LTPPPGTTAPPPPGPASPVPPLR). The cysteines at positions 173 and 202 are disulfide-linked. In terms of domain architecture, CUB 1 spans 173–286 (CNNNISEGEG…NGFRIHYQAY (114 aa)). Residue asparagine 222 is glycosylated (N-linked (GlcNAc...) asparagine). The region spanning 288–347 (LSCGFPPRPAHGDVSVTDLHPGGTATFHCDSGYQLQGEETLICLNGTRPAWTGEPPSCTA) is the Sushi 1 domain. Intrachain disulfides connect cysteine 290–cysteine 330, cysteine 316–cysteine 345, cysteine 349–cysteine 376, cysteine 464–cysteine 508, cysteine 491–cysteine 523, cysteine 527–cysteine 553, cysteine 644–cysteine 686, cysteine 672–cysteine 699, cysteine 705–cysteine 747, cysteine 733–cysteine 764, cysteine 771–cysteine 813, and cysteine 799–cysteine 828. 4 N-linked (GlcNAc...) asparagine glycosylation sites follow: asparagine 332, asparagine 373, asparagine 473, and asparagine 517. The region spanning 349–459 (CGGTIHNATL…LLLSLRFEAF (111 aa)) is the CUB 2 domain. Residues 462–525 (DRCFPPFLAH…WNDTEPACKA (64 aa)) form the Sushi 2 domain. The 112-residue stretch at 527 to 638 (CGGELSEPAG…QGFVLHFKEV (112 aa)) folds into the CUB 3 domain. 3 Sushi domains span residues 642 to 701 (DTCP…ACQK), 703 to 766 (MTCA…KCAL), and 769 to 830 (EPCL…LCKV). The chain crosses the membrane as a helical span at residues 845-865 (LALAILLPLGLVIVLGIGVYI). The Cytoplasmic segment spans residues 866-910 (YYTKLQGKSLFGFSGSHSYSPITVESDFSNPLYEAGDTREYEVSI).

This sequence belongs to the SEZ6 family. As to expression, expressed exclusively in the brain, predominantly in the neurons. Wide expression in the gray matter of the brain with high levels in the olfactory bulb, anterior olfactory nuclei, hippocampal formation and cerebellar cortex. Detected diffusely and weakly in the white matter, such as the corpus callosum and cerebellar medulla. In the cerebellar cortex, intensely expressed in Purkinje cells (PC) and granule cells. Detected also in interneurons in the molecular layer. Up-regulated at two weeks after birth.

The protein resides in the cell membrane. Its subcellular location is the endoplasmic reticulum membrane. In terms of biological role, may contribute to specialized endoplasmic reticulum functions in neurons. This is Seizure 6-like protein 2 (Sez6l2) from Mus musculus (Mouse).